The following is a 232-amino-acid chain: Sugar fermentation stimulation protein homolog (232 aa).

Belongs to the SfsA family.

The protein is Sugar fermentation stimulation protein homolog of Alkaliphilus metalliredigens (strain QYMF).